The sequence spans 284 residues: Origin of replication complex subunit 6 (284 aa).

The protein belongs to the ORC6 family. As to quaternary structure, component of the origin recognition complex (ORC) composed of at least ORC1 (ORC1A or ORC1B), ORC2, ORC3, ORC4, ORC5 and ORC6. ORC is regulated in a cell-cycle and development dependent manner. It is sequentially assembled at the exit from anaphase of mitosis and disassembled as cells enter S phase. Interacts directly with ORC2, ORC3, ORC4 and ORC5. In terms of tissue distribution, follow a cell-cycle regulation with a peak at the G1/S-phase. Mostly expressed in siliques, flowers, flower buds and mature leaves, and, to a lower exent, in roots, leaves and stems.

The protein resides in the nucleus. In terms of biological role, component of the origin recognition complex (ORC) that binds origins of replication. DNA-binding is ATP-dependent. The specific DNA sequences that define origins of replication have not been identified yet. ORC is required to assemble the pre-replication complex necessary to initiate DNA replication. In Arabidopsis thaliana (Mouse-ear cress), this protein is Origin of replication complex subunit 6.